A 328-amino-acid chain; its full sequence is Gonadotropin-releasing hormone receptor (328 aa).

The Extracellular segment spans residues 1 to 38; sequence MANRAYLEQKQTQCSIINSSFSMTHRDLPTLTLSGKIR. N-linked (GlcNAc...) asparagine glycosylation is present at Asn-18. A helical transmembrane segment spans residues 39 to 58; that stretch reads VMVTFFLFLVSTAFNASFLM. Residues 59–77 lie on the Cytoplasmic side of the membrane; sequence KLQRQTQKKEEVKKLTRMK. Residues 78–97 traverse the membrane as a helical segment; it reads VLLKHLTLANLLETVIVMPL. Over 98-115 the chain is Extracellular; it reads DGIWNVTVQWYAGEFLCK. Asn-102 carries an N-linked (GlcNAc...) asparagine glycan. Cys-114 and Cys-196 form a disulfide bridge. A helical membrane pass occupies residues 116-137; it reads ALSYLKLFSMYAPAFMMVVISL. Residues 138–164 lie on the Cytoplasmic side of the membrane; it reads DRFLAITRPLAVKSNTKVGQSLIAVAW. Residues 165–184 form a helical membrane-spanning segment; the sequence is FLSIVLAGPQLYIFRMIYVE. Topologically, residues 185 to 212 are extracellular; it reads DISGQTGNFSQCVTHCSFPEWWQEAFYN. The N-linked (GlcNAc...) asparagine glycan is linked to Asn-192. A helical transmembrane segment spans residues 213–232; that stretch reads LLTFSCLFIGPLLIMLVCNA. Over 233-281 the chain is Cytoplasmic; it reads KIIFTLTQVLHQDPHELQLNRSKNNIPRARLRTLKMTVAFATLFTICWT. The helical transmembrane segment at 282–300 threads the bilayer; the sequence is PYYVLGIWYWFDPEMLNRV. Residues 301–306 lie on the Extracellular side of the membrane; it reads SDPVNH. Residues 307–326 traverse the membrane as a helical segment; that stretch reads FFFLFGLLNPCFDPLIYGYF. At 327-328 the chain is on the cytoplasmic side; sequence SL.

This sequence belongs to the G-protein coupled receptor 1 family.

It localises to the cell membrane. Its function is as follows. Receptor for gonadotropin releasing hormone (GnRH) that mediates the action of GnRH to stimulate the secretion of the gonadotropic hormones luteinizing hormone (LH) and follicle-stimulating hormone (FSH). This receptor mediates its action by association with G-proteins that activate a phosphatidylinositol-calcium second messenger system. The protein is Gonadotropin-releasing hormone receptor (GNRHR) of Trichosurus vulpecula (Brush-tailed possum).